A 308-amino-acid polypeptide reads, in one-letter code: Mitochondrial import receptor subunit TOM40B (308 aa).

Residues 1-29 are disordered; it reads MGNTLGLAPMGTLPRRSHRREEPLPNPGS. The interval 281-308 is required for mitochondrial targeting; it reads PLPVTLALGAFLNHWRNRFHCGFSITVG.

Belongs to the Tom40 family. In terms of assembly, forms part of the preprotein translocase of the outer mitochondrial membrane (TOM complex) containing TOMM22, TOMM40, TOMM40L and TOMM70. Interacts with mitochondrial targeting sequences.

The protein localises to the mitochondrion outer membrane. Functionally, potential channel-forming protein implicated in import of protein precursors into mitochondria. This chain is Mitochondrial import receptor subunit TOM40B (Tomm40l), found in Mus musculus (Mouse).